Reading from the N-terminus, the 308-residue chain is Pseudouridine-5'-phosphate glycosidase (308 aa).

The Proton donor role is filled by Glu-26. Substrate is bound by residues Lys-87 and Val-107. Asp-139 is a Mn(2+) binding site. 141-143 (SAD) provides a ligand contact to substrate. The Nucleophile role is filled by Lys-160.

The protein belongs to the pseudouridine-5'-phosphate glycosidase family. As to quaternary structure, homotrimer. It depends on Mn(2+) as a cofactor.

It carries out the reaction D-ribose 5-phosphate + uracil = psi-UMP + H2O. Its function is as follows. Catalyzes the reversible cleavage of pseudouridine 5'-phosphate (PsiMP) to ribose 5-phosphate and uracil. Functions biologically in the cleavage direction, as part of a pseudouridine degradation pathway. The polypeptide is Pseudouridine-5'-phosphate glycosidase (Legionella pneumophila subsp. pneumophila (strain Philadelphia 1 / ATCC 33152 / DSM 7513)).